The chain runs to 1408 residues: DNA-directed RNA polymerase subunit beta (1408 aa).

The interval 1383–1408 (PERQRSFGGDFLGGGDGEERKTGTEA) is disordered. A compositionally biased stretch (basic and acidic residues) spans 1399–1408 (GEERKTGTEA).

The protein belongs to the RNA polymerase beta chain family. The RNAP catalytic core consists of 2 alpha, 1 beta, 1 beta' and 1 omega subunit. When a sigma factor is associated with the core the holoenzyme is formed, which can initiate transcription.

The catalysed reaction is RNA(n) + a ribonucleoside 5'-triphosphate = RNA(n+1) + diphosphate. Functionally, DNA-dependent RNA polymerase catalyzes the transcription of DNA into RNA using the four ribonucleoside triphosphates as substrates. In Myxococcus xanthus (strain DK1622), this protein is DNA-directed RNA polymerase subunit beta.